We begin with the raw amino-acid sequence, 103 residues long: MIKSELVQRIAEHNPHLYQRDVENIVNAILDEIVAALARGDRVELRGFGAFSVKHRPARAGRNPRTGAHVPVDQKSVPFFKTGKEMRERLNRDNPAGAADTDD.

Belongs to the bacterial histone-like protein family. In terms of assembly, heterodimer of an alpha and a beta chain.

In terms of biological role, this protein is one of the two subunits of integration host factor, a specific DNA-binding protein that functions in genetic recombination as well as in transcriptional and translational control. In Bradyrhizobium sp. (strain BTAi1 / ATCC BAA-1182), this protein is Integration host factor subunit beta.